A 332-amino-acid chain; its full sequence is Fructose-bisphosphate aldolase (332 aa).

Serine 56 provides a ligand contact to D-glyceraldehyde 3-phosphate. Aspartate 93 serves as the catalytic Proton donor. 4 residues coordinate Zn(2+): histidine 94, aspartate 115, glutamate 147, and histidine 191. Glycine 192 is a dihydroxyacetone phosphate binding site. Residue histidine 234 participates in Zn(2+) binding. Dihydroxyacetone phosphate contacts are provided by residues 235 to 237 and 277 to 280; these read GAS and NIDS.

It belongs to the class II fructose-bisphosphate aldolase family. Homodimer. Requires Zn(2+) as cofactor.

It carries out the reaction beta-D-fructose 1,6-bisphosphate = D-glyceraldehyde 3-phosphate + dihydroxyacetone phosphate. It participates in carbohydrate degradation; glycolysis; D-glyceraldehyde 3-phosphate and glycerone phosphate from D-glucose: step 4/4. Functionally, catalyzes the aldol condensation of dihydroxyacetone phosphate (DHAP or glycerone-phosphate) with glyceraldehyde 3-phosphate (G3P) to form fructose 1,6-bisphosphate (FBP) in gluconeogenesis and the reverse reaction in glycolysis. This chain is Fructose-bisphosphate aldolase (fba), found in Treponema pallidum (strain Nichols).